A 398-amino-acid polypeptide reads, in one-letter code: Argininosuccinate synthase (398 aa).

Residues 9 to 17 and alanine 36 each bind ATP; that span reads AYSGGLDTS. Residues tyrosine 87 and serine 92 each coordinate L-citrulline. Glycine 117 provides a ligand contact to ATP. L-aspartate is bound by residues threonine 119, asparagine 123, and aspartate 124. Asparagine 123 lines the L-citrulline pocket. Residues arginine 127, serine 176, serine 185, glutamate 261, and tyrosine 273 each contribute to the L-citrulline site.

The protein belongs to the argininosuccinate synthase family. Type 1 subfamily. As to quaternary structure, homotetramer.

It is found in the cytoplasm. It catalyses the reaction L-citrulline + L-aspartate + ATP = 2-(N(omega)-L-arginino)succinate + AMP + diphosphate + H(+). The protein operates within amino-acid biosynthesis; L-arginine biosynthesis; L-arginine from L-ornithine and carbamoyl phosphate: step 2/3. This is Argininosuccinate synthase from Desulfotalea psychrophila (strain LSv54 / DSM 12343).